The following is a 538-amino-acid chain: L-aspartate oxidase (538 aa).

Residues 14–17, K36, 43–50, and D223 contribute to the FAD site; these read SGAA and STYWAQGG. R290 (proton donor/acceptor) is an active-site residue. FAD-binding positions include E375 and 391–392; that span reads SL.

It belongs to the FAD-dependent oxidoreductase 2 family. NadB subfamily. FAD is required as a cofactor.

It localises to the cytoplasm. The enzyme catalyses L-aspartate + O2 = iminosuccinate + H2O2. It functions in the pathway cofactor biosynthesis; NAD(+) biosynthesis; iminoaspartate from L-aspartate (oxidase route): step 1/1. Its function is as follows. Catalyzes the oxidation of L-aspartate to iminoaspartate, the first step in the de novo biosynthesis of NAD(+). The protein is L-aspartate oxidase (nadB) of Pseudomonas aeruginosa (strain ATCC 15692 / DSM 22644 / CIP 104116 / JCM 14847 / LMG 12228 / 1C / PRS 101 / PAO1).